The primary structure comprises 184 residues: Tumor necrosis factor alpha-induced protein 8-like protein 2 (184 aa).

S3 carries the phosphoserine modification.

Belongs to the TNFAIP8 family. TNFAIP8L2 subfamily. In terms of assembly, may interact with CASP8; however, such result is unclear since could not reproduce the interaction with CASP8. Interacts with RAC1. In terms of processing, phosphorylated by TAK1/MAP3K7; this phosphorylation triggers association with BTRC and subsequent ubiquitination and degradation. Post-translationally, ubiquitinated in a BTRC-depdent manner; leading to degradation mediated through the proteasome pathway.

It localises to the cytoplasm. It is found in the nucleus. The protein resides in the lysosome. Acts as a negative regulator of innate and adaptive immunity by maintaining immune homeostasis. Plays a regulatory role in the Toll-like signaling pathway by determining the strength of LPS-induced signaling and gene expression. Inhibits TCR-mediated T-cell activation and negatively regulate T-cell function to prevent hyperresponsiveness. Also inhibits autolysosome formation via negatively modulating MTOR activation by interacting with RAC1 and promoting the disassociation of the RAC1-MTOR complex. Plays an essential role in NK-cell biology by acting as a checkpoint and displaying an expression pattern correlating with NK-cell maturation process and by negatively regulating NK-cell maturation and antitumor immunity. Mechanistically, suppresses IL-15-triggered mTOR activity in NK-cells. In Oryctolagus cuniculus (Rabbit), this protein is Tumor necrosis factor alpha-induced protein 8-like protein 2 (TNFAIP8L2).